The chain runs to 285 residues: 1,4-dihydroxy-2-naphthoyl-CoA synthase (285 aa).

Substrate contacts are provided by residues Arg-45, 84–88, Tyr-97, 129–133, Thr-155, Ser-161, Tyr-258, and Lys-273; these read SGGDQ and YAIGG. Residue 154-156 participates in hydrogencarbonate binding; it reads QTG.

Belongs to the enoyl-CoA hydratase/isomerase family. MenB subfamily. The cofactor is hydrogencarbonate.

The catalysed reaction is 2-succinylbenzoyl-CoA + H(+) = 1,4-dihydroxy-2-naphthoyl-CoA + H2O. The protein operates within quinol/quinone metabolism; 1,4-dihydroxy-2-naphthoate biosynthesis; 1,4-dihydroxy-2-naphthoate from chorismate: step 6/7. It functions in the pathway quinol/quinone metabolism; menaquinone biosynthesis. Converts o-succinylbenzoyl-CoA (OSB-CoA) to 1,4-dihydroxy-2-naphthoyl-CoA (DHNA-CoA). This Haemophilus influenzae (strain ATCC 51907 / DSM 11121 / KW20 / Rd) protein is 1,4-dihydroxy-2-naphthoyl-CoA synthase.